The chain runs to 201 residues: Prostamide/prostaglandin F synthase (201 aa).

A Phosphotyrosine modification is found at Tyr-108.

Belongs to the peroxiredoxin-like PRXL2 family. Prostamide/prostaglandin F synthase subfamily.

It localises to the cytoplasm. The protein resides in the cytosol. It carries out the reaction prostaglandin H2 + [thioredoxin]-dithiol = prostaglandin F2alpha + [thioredoxin]-disulfide. The enzyme catalyses prostamide F2alpha + [thioredoxin]-disulfide = prostamide H2 + [thioredoxin]-dithiol. Catalyzes the reduction of prostaglandin-ethanolamide H(2) (prostamide H(2)) to prostamide F(2alpha) with NADPH as proton donor. Also able to reduce prostaglandin H(2) to prostaglandin F(2alpha). This Bos taurus (Bovine) protein is Prostamide/prostaglandin F synthase (PRXL2B).